Reading from the N-terminus, the 407-residue chain is Na(+)-translocating NADH-quinone reductase subunit F (407 aa).

A helical membrane pass occupies residues 3–23; sequence IILGVVMFTLIVLALVLVILF. The region spanning 32–126 is the 2Fe-2S ferredoxin-type domain; that stretch reads GDITISVNDD…DMDIELPEEI (95 aa). Cys-69, Cys-75, Cys-78, and Cys-110 together coordinate [2Fe-2S] cluster. The region spanning 129–269 is the FAD-binding FR-type domain; that stretch reads VKKWECTVIS…SGPFGEFFAK (141 aa). Residues 272–389 are catalytic; it reads DAEMVFVGGG…PMMNAAVIGM (118 aa).

This sequence belongs to the NqrF family. Composed of six subunits; NqrA, NqrB, NqrC, NqrD, NqrE and NqrF. [2Fe-2S] cluster serves as cofactor. The cofactor is FAD.

It is found in the cell inner membrane. The enzyme catalyses a ubiquinone + n Na(+)(in) + NADH + H(+) = a ubiquinol + n Na(+)(out) + NAD(+). Functionally, NQR complex catalyzes the reduction of ubiquinone-1 to ubiquinol by two successive reactions, coupled with the transport of Na(+) ions from the cytoplasm to the periplasm. The first step is catalyzed by NqrF, which accepts electrons from NADH and reduces ubiquinone-1 to ubisemiquinone by a one-electron transfer pathway. This Vibrio campbellii (strain ATCC BAA-1116) protein is Na(+)-translocating NADH-quinone reductase subunit F.